A 339-amino-acid polypeptide reads, in one-letter code: DNA-directed RNA polymerase subunit alpha (339 aa).

The interval 1-237 (MENELMYMNW…EQMNVFINFD (237 aa)) is alpha N-terminal domain (alpha-NTD). The interval 256-339 (FNENLYRSVN…PPAEDNKEGE (84 aa)) is alpha C-terminal domain (alpha-CTD).

It belongs to the RNA polymerase alpha chain family. In terms of assembly, homodimer. The RNAP catalytic core consists of 2 alpha, 1 beta, 1 beta' and 1 omega subunit. When a sigma factor is associated with the core the holoenzyme is formed, which can initiate transcription.

It carries out the reaction RNA(n) + a ribonucleoside 5'-triphosphate = RNA(n+1) + diphosphate. Its function is as follows. DNA-dependent RNA polymerase catalyzes the transcription of DNA into RNA using the four ribonucleoside triphosphates as substrates. The chain is DNA-directed RNA polymerase subunit alpha from Desulfosudis oleivorans (strain DSM 6200 / JCM 39069 / Hxd3) (Desulfococcus oleovorans).